Reading from the N-terminus, the 126-residue chain is UPF0102 protein MXAN_3551 (126 aa).

It belongs to the UPF0102 family.

The protein is UPF0102 protein MXAN_3551 of Myxococcus xanthus (strain DK1622).